The following is a 378-amino-acid chain: Heterogeneous nuclear ribonucleoprotein A3 (378 aa).

At M1 the chain carries N-acetylmethionine. A compositionally biased stretch (pro residues) spans 1-10; sequence MEVKPPPGRP. Positions 1–34 are disordered; sequence MEVKPPPGRPQPDSGRRRRRRGEEGHDPKEPEQL. Residue K4 forms a Glycyl lysine isopeptide (Lys-Gly) (interchain with G-Cter in SUMO2) linkage. Position 14 is a phosphoserine (S14). Positions 21–34 are enriched in basic and acidic residues; the sequence is RGEEGHDPKEPEQL. The 84-residue stretch at 35–118 folds into the RRM 1 domain; that stretch reads RKLFIGGLSF…RAVSREDSVK (84 aa). A Glycyl lysine isopeptide (Lys-Gly) (interchain with G-Cter in SUMO2) cross-link involves residue K36. S43 is modified (phosphoserine). A Dimethylated arginine; alternate modification is found at R52. R52 is modified (omega-N-methylarginine; alternate). R76 is subject to Omega-N-methylarginine. Phosphoserine occurs at positions 112 and 116. K118 participates in a covalent cross-link: Glycyl lysine isopeptide (Lys-Gly) (interchain with G-Cter in SUMO2). T124 bears the Phosphothreonine mark. The RRM 2 domain maps to 126-205; the sequence is KKIFVGGIKE…CEVKKALSKQ (80 aa). K134 is subject to N6-acetyllysine; alternate. A Glycyl lysine isopeptide (Lys-Gly) (interchain with G-Cter in SUMO2); alternate cross-link involves residue K134. Residues K151 and K182 each participate in a glycyl lysine isopeptide (Lys-Gly) (interchain with G-Cter in SUMO2) cross-link. Residues 204–225 form a disordered region; it reads KQEMQSAGSQRGRGGGSGNFMG. Residues R214, R216, R226, R239, and R246 each carry the omega-N-methylarginine; alternate modification. Residues R214, R216, R226, R239, and R246 each carry the asymmetric dimethylarginine; alternate modification. Positions 214-225 are enriched in gly residues; it reads RGRGGGSGNFMG. Position 257 is an omega-N-methylarginine (R257). Residue R286 is modified to Asymmetric dimethylarginine. The interval 336–378 is disordered; the sequence is SGQQQSNYGPMKGGSFGGRSSGSPYGGGYGSGGGSGGYGSRRF. Residues 346–378 are compositionally biased toward gly residues; it reads MKGGSFGGRSSGSPYGGGYGSGGGSGGYGSRRF. Residue S350 is modified to Phosphoserine. Omega-N-methylarginine is present on R354. The residue at position 358 (S358) is a Phosphoserine. A phosphotyrosine mark is found at Y360 and Y364. Phosphoserine is present on residues S366 and S370. Y373 bears the Phosphotyrosine mark. S375 is modified (phosphoserine).

Identified in the spliceosome C complex.

Its subcellular location is the nucleus. Plays a role in cytoplasmic trafficking of RNA. Binds to the cis-acting response element, A2RE. May be involved in pre-mRNA splicing. This chain is Heterogeneous nuclear ribonucleoprotein A3 (HNRNPA3), found in Homo sapiens (Human).